The chain runs to 161 residues: Cyclic pyranopterin monophosphate synthase (161 aa).

Residues 75–77 and 113–114 contribute to the substrate site; these read LCH and ME. The active site involves D128.

This sequence belongs to the MoaC family. In terms of assembly, homohexamer; trimer of dimers.

It carries out the reaction (8S)-3',8-cyclo-7,8-dihydroguanosine 5'-triphosphate = cyclic pyranopterin phosphate + diphosphate. It functions in the pathway cofactor biosynthesis; molybdopterin biosynthesis. In terms of biological role, catalyzes the conversion of (8S)-3',8-cyclo-7,8-dihydroguanosine 5'-triphosphate to cyclic pyranopterin monophosphate (cPMP). In Thioalkalivibrio sulfidiphilus (strain HL-EbGR7), this protein is Cyclic pyranopterin monophosphate synthase.